We begin with the raw amino-acid sequence, 164 residues long: MEQFLKIGLIINTHGLKGELKVNPQTDNIDRFKKLKRVYIAGEEKQVEGCKFLNDKVVLKIQGIDGIEIANKYRNKYIEVKREDAVELPEGRYYVADIIGCKVLDEDGNYLGKVKEVIHTKNNDVYWVEGKKELLIPVLKTIVVKIDIENEEIIIKPVKTWLLE.

Positions 90–161 constitute a PRC barrel domain; it reads EGRYYVADII…EIIIKPVKTW (72 aa).

The protein belongs to the RimM family. In terms of assembly, binds ribosomal protein uS19.

Its subcellular location is the cytoplasm. In terms of biological role, an accessory protein needed during the final step in the assembly of 30S ribosomal subunit, possibly for assembly of the head region. Essential for efficient processing of 16S rRNA. May be needed both before and after RbfA during the maturation of 16S rRNA. It has affinity for free ribosomal 30S subunits but not for 70S ribosomes. The sequence is that of Ribosome maturation factor RimM from Clostridium tetani (strain Massachusetts / E88).